The chain runs to 112 residues: Larval cuticle protein 4 (112 aa).

A signal peptide spans 1-16; sequence MFKILLVCALVALVAA. The region spanning 31–92 is the Chitin-binding type R&amp;R domain; the sequence is ADGFVSKLVL…PQSDLLPTPP (62 aa).

Its function is as follows. Component of the larval cuticle. This is Larval cuticle protein 4 (Lcp4) from Drosophila melanogaster (Fruit fly).